A 265-amino-acid chain; its full sequence is Apolipoprotein A-I (265 aa).

A signal peptide spans 1 to 18 (MKAVVLTLAVLFLTGSQA). Repeat copies occupy residues 67-88 (LKLVDNWDTLGSTFQKVHEHLG) and 89-110 (PVAQEFWEKLEKETEELRREIN). The tract at residues 67–265 (LKLVDNWDTL…IDEAAKKLTA (199 aa)) is 10 X approximate tandem repeats. One copy of the 3; half-length repeat lies at 111-121 (KDLEDVRQKTQ). Tandem repeats lie at residues 122–143 (PFLDEIQKKWQEDLERYRQKVE), 144–165 (PLSAQLREGARQKLMELQEQVT), 166–187 (PLGEDLRDSVRAYADTLRTQLA), 188–209 (PYSEQMRKTLGARLEAIKEGGS), and 210–231 (ASLAEYHAKASEQLSALGEKAK). M193 carries the methionine sulfoxide modification. The stretch at 232–242 (PVLEDIHQGLM) is one 9; half-length repeat. M242 and M244 each carry methionine sulfoxide. The stretch at 243–265 (PMWESFKTGVLNVIDEAAKKLTA) is repeat 10.

This sequence belongs to the apolipoprotein A1/A4/E family. As to quaternary structure, homodimer. Interacts with APOA1BP and CLU. Component of a sperm activating protein complex (SPAP), consisting of APOA1, an immunoglobulin heavy chain, an immunoglobulin light chain and albumin. Interacts with NDRG1. Interacts with SCGB3A2. Interacts with NAXE and YJEFN3. In terms of processing, glycosylated. Post-translationally, palmitoylated. Phosphorylation sites are present in the extracellular medium. In terms of tissue distribution, major protein of plasma HDL, also found in chylomicrons.

The protein localises to the secreted. Participates in the reverse transport of cholesterol from tissues to the liver for excretion by promoting cholesterol efflux from tissues and by acting as a cofactor for the lecithin cholesterol acyltransferase (LCAT). As part of the SPAP complex, activates spermatozoa motility. The protein is Apolipoprotein A-I (APOA1) of Tupaia belangeri (Common tree shrew).